The primary structure comprises 357 residues: Alpha-2-macroglobulin receptor-associated protein (357 aa).

A signal peptide spans 1 to 34 (MAPRRVRSFLRGLPALLLLLLFLGPWPAASHGGK). The disordered stretch occupies residues 32–52 (GGKYSREKNQPKPSPKRESGE). A compositionally biased stretch (basic and acidic residues) spans 35-52 (YSREKNQPKPSPKRESGE). Residues serine 50 and serine 135 each carry the phosphoserine modification. A coiled-coil region spans residues 219 to 310 (SRHTELKEKL…AHEKLRHAES (92 aa)). The LDL receptor binding stretch occupies residues 237–353 (RLRRVSHQGY…DLSGRISRAR (117 aa)). At threonine 248 the chain carries Phosphothreonine. The N-linked (GlcNAc...) asparagine glycan is linked to asparagine 268. Positions 354–357 (HNEL) match the Prevents secretion from ER motif.

It belongs to the alpha-2-MRAP family. As to quaternary structure, interacts with the LRP1/alpha-2-macroglobulin receptor heavy and light chains; the interaction is transient and coincides with a reduction of ligand binding by the receptor. Interacts with LRP2/glycoprotein 330. Interacts with LRP1B; binding is followed by internalization and degradation. Interacts with LDLR. Interacts with SORL1. Interacts with LRP1; this interaction is followed by rapid internalization. In terms of processing, N-glycosylated.

The protein resides in the rough endoplasmic reticulum lumen. The protein localises to the endoplasmic reticulum-Golgi intermediate compartment lumen. Its subcellular location is the golgi apparatus. It localises to the cis-Golgi network. It is found in the golgi apparatus lumen. The protein resides in the endosome lumen. The protein localises to the cell surface. In terms of biological role, molecular chaperone for LDL receptor-related proteins that may regulate their ligand binding activity along the secretory pathway. The protein is Alpha-2-macroglobulin receptor-associated protein of Homo sapiens (Human).